Consider the following 617-residue polypeptide: Electron transfer flavoprotein-ubiquinone oxidoreductase, mitochondrial (617 aa).

The N-terminal 33 residues, 1–33 (MMVPLAKLASPAYQCFHALKIKKNYLPLCATRW), are a transit peptide targeting the mitochondrion. 75-80 (GAGPAG) serves as a coordination point for FAD. N6-acetyllysine is present on lysine 96. The stretch at 109–130 (IGAHTLSGACLDPRAFEELFPD) is an intramembrane region. Lysine 132 and lysine 223 each carry N6-acetyllysine. Residues glycine 305 and glycine 306 each coordinate a ubiquinone. Lysine 357 carries the N6-acetyllysine modification. Residues 428-447 (IGLHVTEYEDNLKNSWVWKE) lie within the membrane without spanning it. Serine 551 is subject to Phosphoserine. [4Fe-4S] cluster contacts are provided by cysteine 561, cysteine 586, cysteine 589, and cysteine 592. In terms of domain architecture, 4Fe-4S ferredoxin-type spans 577–606 (FRLQINAQNCVHCKTCDIKDPSQNINWVVP).

In terms of assembly, monomer. It depends on [4Fe-4S] cluster as a cofactor. Requires FAD as cofactor.

The protein resides in the mitochondrion inner membrane. The catalysed reaction is a ubiquinone + reduced [electron-transfer flavoprotein] = a ubiquinol + oxidized [electron-transfer flavoprotein] + H(+). Functionally, accepts electrons from ETF and reduces ubiquinone. This chain is Electron transfer flavoprotein-ubiquinone oxidoreductase, mitochondrial (ETFDH), found in Sus scrofa (Pig).